Consider the following 113-residue polypeptide: Large ribosomal subunit protein bL19 (113 aa).

Belongs to the bacterial ribosomal protein bL19 family.

In terms of biological role, this protein is located at the 30S-50S ribosomal subunit interface and may play a role in the structure and function of the aminoacyl-tRNA binding site. This is Large ribosomal subunit protein bL19 from Mycobacterium leprae (strain Br4923).